A 210-amino-acid polypeptide reads, in one-letter code: ATP-dependent Clp protease proteolytic subunit (210 aa).

Ser107 functions as the Nucleophile in the catalytic mechanism. His132 is an active-site residue.

This sequence belongs to the peptidase S14 family. Fourteen ClpP subunits assemble into 2 heptameric rings which stack back to back to give a disk-like structure with a central cavity, resembling the structure of eukaryotic proteasomes.

It is found in the cytoplasm. It carries out the reaction Hydrolysis of proteins to small peptides in the presence of ATP and magnesium. alpha-casein is the usual test substrate. In the absence of ATP, only oligopeptides shorter than five residues are hydrolyzed (such as succinyl-Leu-Tyr-|-NHMec, and Leu-Tyr-Leu-|-Tyr-Trp, in which cleavage of the -Tyr-|-Leu- and -Tyr-|-Trp bonds also occurs).. Functionally, cleaves peptides in various proteins in a process that requires ATP hydrolysis. Has a chymotrypsin-like activity. Plays a major role in the degradation of misfolded proteins. This is ATP-dependent Clp protease proteolytic subunit from Ruegeria sp. (strain TM1040) (Silicibacter sp.).